Consider the following 475-residue polypeptide: GTPase Der (475 aa).

EngA-type G domains follow at residues 3 to 167 (LTIA…GGER) and 205 to 380 (LRIA…RVWN). Residues 9–16 (GRPNVGKS), 56–60 (DTAGL), 119–122 (NKSE), 211–218 (GRPNTGKS), 258–262 (DTAGL), and 323–326 (NKWD) each bind GTP. Residues 381-465 (RRISTGKLNR…PIRISLRASD (85 aa)) enclose the KH-like domain.

Belongs to the TRAFAC class TrmE-Era-EngA-EngB-Septin-like GTPase superfamily. EngA (Der) GTPase family. In terms of assembly, associates with the 50S ribosomal subunit.

Its function is as follows. GTPase that plays an essential role in the late steps of ribosome biogenesis. This is GTPase Der from Bartonella henselae (strain ATCC 49882 / DSM 28221 / CCUG 30454 / Houston 1) (Rochalimaea henselae).